The chain runs to 498 residues: POU domain protein 2, isoform A (498 aa).

The span at 1 to 30 (MMVLQQQQQQRLWDATTTSNTNTQTQQSAN) shows a compositional bias: low complexity. The tract at residues 1 to 35 (MMVLQQQQQQRLWDATTTSNTNTQTQQSANVESTP) is disordered. A phosphoserine mark is found at Ser72, Ser211, Ser215, Ser217, and Ser219. Residues 191–273 (QMKQQQREDP…STPKPTSGLT (83 aa)) form a disordered region. Low complexity predominate over residues 207–222 (PLAKSPLRSPSLSPVP). Positions 228–251 (QQRTPPNSMTANSLGMSSAVMTPN) are enriched in polar residues. The span at 252–270 (TPSMQQQPQLQQSTPKPTS) shows a compositional bias: low complexity. Residues 286-360 (EETTDLEELE…LLQKWLEDAD (75 aa)) enclose the POU-specific domain. The segment at residues 391–450 (RRKKRTSIETTVRTTLEKAFLMNCKPTSEEISQLSERLNMDKEVIRVWFCNRRQKEKRIN) is a DNA-binding region (homeobox).

Belongs to the POU transcription factor family. Class-2 subfamily. As to expression, initial expression in cellular blastoderm stage, then in ectodermal stripes during germband extension. Broad expression in the neuroectoderm followed by limitation to discrete subsets of CNS cells, and expression in specific PNS neurons and support cells.

It localises to the nucleus. In terms of biological role, DNA-binding regulatory protein implicated in early development. Involved in neuronal cell fate decision. May act as an octamer-dependent activator of transcription. Could also play an early role in specific ectodermal cells, and a subsequent role in the embryonic nervous system. This Drosophila melanogaster (Fruit fly) protein is POU domain protein 2, isoform A (pdm2).